The chain runs to 172 residues: RNA silencing suppressor p19 (172 aa).

Composition is skewed to basic and acidic residues over residues 1-14 (MERA…REQA) and 150-172 (SERE…EESE). Disordered regions lie at residues 1-34 (MERA…KLPD) and 145-172 (LQPT…EESE).

The protein belongs to the tombusvirus protein p19 family. Homodimer.

In terms of biological role, viral suppressor of RNA silencing which binds specifically to silencing RNAs (siRNAs). Acts as a molecular caliper to specifically select siRNAs based on the length of the duplex region of the RNA. The polypeptide is RNA silencing suppressor p19 (Cymbidium ringspot virus (CymRSV)).